The following is an 88-amino-acid chain: Exodeoxyribonuclease 7 small subunit (88 aa).

This sequence belongs to the XseB family. Heterooligomer composed of large and small subunits.

Its subcellular location is the cytoplasm. The enzyme catalyses Exonucleolytic cleavage in either 5'- to 3'- or 3'- to 5'-direction to yield nucleoside 5'-phosphates.. Its function is as follows. Bidirectionally degrades single-stranded DNA into large acid-insoluble oligonucleotides, which are then degraded further into small acid-soluble oligonucleotides. This is Exodeoxyribonuclease 7 small subunit from Bordetella petrii (strain ATCC BAA-461 / DSM 12804 / CCUG 43448).